The sequence spans 103 residues: Large ribosomal subunit protein bL21 (103 aa).

Belongs to the bacterial ribosomal protein bL21 family. As to quaternary structure, part of the 50S ribosomal subunit. Contacts protein L20.

In terms of biological role, this protein binds to 23S rRNA in the presence of protein L20. This is Large ribosomal subunit protein bL21 from Wigglesworthia glossinidia brevipalpis.